The sequence spans 525 residues: Mitogen-activated protein kinase kinase 5 (525 aa).

The region spanning 59-317 (ETEGGFLGKG…CTELLRHPFI (259 aa)) is the Protein kinase domain. ATP-binding positions include 65–73 (LGKGSSGSV) and K88. The active-site Proton acceptor is D178. The segment covering 358 to 367 (SALPLASEGG) has biased composition (low complexity). Disordered regions lie at residues 358 to 392 (SALPLASEGGTPKATSPSPAPVSPLTLSCPLERHD) and 438 to 468 (SASVATDSGEGGGAAGVSAASLDNGQAAQHR).

This sequence belongs to the protein kinase superfamily. STE Ser/Thr protein kinase family. MAP kinase kinase subfamily. Requires Mg(2+) as cofactor.

The catalysed reaction is L-tyrosyl-[protein] + ATP = O-phospho-L-tyrosyl-[protein] + ADP + H(+). The enzyme catalyses L-seryl-[protein] + ATP = O-phospho-L-seryl-[protein] + ADP + H(+). It carries out the reaction L-threonyl-[protein] + ATP = O-phospho-L-threonyl-[protein] + ADP + H(+). Its function is as follows. Protein kinase which phosphorylates and activates MPK4 in vitro. The sequence is that of Mitogen-activated protein kinase kinase 5 from Leishmania mexicana.